The chain runs to 323 residues: Acetyl-coenzyme A carboxylase carboxyl transferase subunit alpha (323 aa).

The CoA carboxyltransferase C-terminal domain maps to 39-293 (RLSKKSQQLT…RRALADSLRQ (255 aa)).

It belongs to the AccA family. In terms of assembly, acetyl-CoA carboxylase is a heterohexamer composed of biotin carboxyl carrier protein (AccB), biotin carboxylase (AccC) and two subunits each of ACCase subunit alpha (AccA) and ACCase subunit beta (AccD).

Its subcellular location is the cytoplasm. The enzyme catalyses N(6)-carboxybiotinyl-L-lysyl-[protein] + acetyl-CoA = N(6)-biotinyl-L-lysyl-[protein] + malonyl-CoA. It participates in lipid metabolism; malonyl-CoA biosynthesis; malonyl-CoA from acetyl-CoA: step 1/1. Component of the acetyl coenzyme A carboxylase (ACC) complex. First, biotin carboxylase catalyzes the carboxylation of biotin on its carrier protein (BCCP) and then the CO(2) group is transferred by the carboxyltransferase to acetyl-CoA to form malonyl-CoA. The chain is Acetyl-coenzyme A carboxylase carboxyl transferase subunit alpha from Burkholderia vietnamiensis (strain G4 / LMG 22486) (Burkholderia cepacia (strain R1808)).